A 145-amino-acid chain; its full sequence is Methyl-coenzyme M reductase I operon protein D (145 aa).

As to quaternary structure, MCR is composed of three subunits: alpha, beta, and gamma. The function of proteins C and D is not known.

The protein is Methyl-coenzyme M reductase I operon protein D (mcrD) of Methanothermobacter thermautotrophicus (strain ATCC 29096 / DSM 1053 / JCM 10044 / NBRC 100330 / Delta H) (Methanobacterium thermoautotrophicum).